Here is a 206-residue protein sequence, read N- to C-terminus: Type III pantothenate kinase (206 aa).

Residue 5–12 (DIGNTFLH) participates in ATP binding. Substrate is bound by residues Y69 and 73–76 (GVDR). D75 (proton acceptor) is an active-site residue. D90 lines the K(+) pocket. S93 serves as a coordination point for ATP. T145 is a substrate binding site.

The protein belongs to the type III pantothenate kinase family. As to quaternary structure, homodimer. Requires NH4(+) as cofactor. K(+) is required as a cofactor.

The protein resides in the cytoplasm. It catalyses the reaction (R)-pantothenate + ATP = (R)-4'-phosphopantothenate + ADP + H(+). It functions in the pathway cofactor biosynthesis; coenzyme A biosynthesis; CoA from (R)-pantothenate: step 1/5. Functionally, catalyzes the phosphorylation of pantothenate (Pan), the first step in CoA biosynthesis. This chain is Type III pantothenate kinase, found in Helicobacter hepaticus (strain ATCC 51449 / 3B1).